Consider the following 404-residue polypeptide: tRNA pseudouridine synthase D (404 aa).

The Nucleophile role is filled by aspartate 79. In terms of domain architecture, TRUD spans 154 to 364 (GVPNRFGEQR…MEGERRPLRV (211 aa)).

Belongs to the pseudouridine synthase TruD family.

The enzyme catalyses uridine(13) in tRNA = pseudouridine(13) in tRNA. Functionally, responsible for synthesis of pseudouridine from uracil-13 in transfer RNAs. This chain is tRNA pseudouridine synthase D, found in Geobacter metallireducens (strain ATCC 53774 / DSM 7210 / GS-15).